The following is a 504-amino-acid chain: Probable ergothioneine transporter EgtUBC (504 aa).

In terms of domain architecture, ABC transmembrane type-1 spans 19–198; the sequence is MIEHIQISFI…LLAIIFDLIL (180 aa). 6 helical membrane-spanning segments follow: residues 25–45, 49–69, 70–90, 145–165, 178–198, and 209–229; these read ISFIALLIATAIAVPLGILLT, TISEIVMNIAAILQTIPSLAL, LGLMIPLFGIGRVPAIIALVV, AMVLIIGTATLAALIGAGGLG, SLILLGAIPAALLAIIFDLIL, and LLMTLGVIVMIIILAIAIPMF. The tract at residues 231–504 is ergothioneine binding domain; the sequence is QKGDKITLAG…DYLKAKGLIK (274 aa).

In the N-terminal section; belongs to the binding-protein-dependent transport system permease family. The protein in the C-terminal section; belongs to the OsmX family. The complex is probably composed of at least an ATP-binding protein (EgtUA) and a transmembrane protein (EgtUBC).

The protein resides in the membrane. Part of an ABC transporter complex EgtU required for the uptake of ergothioneine (EGT), a natural low-molecular weight (LMW) thiol antioxidant. Responsible for the translocation of the substrate across the membrane. Also contains a C-terminal periplasmic solute-binding domain (SBD) which binds to EGT with sub-micromolar affinity. Probably does not bind L-hercynine. In Staphylococcus aureus (strain USA300), this protein is Probable ergothioneine transporter EgtUBC (egtUBC).